A 251-amino-acid chain; its full sequence is 3-deoxy-manno-octulosonate cytidylyltransferase (251 aa).

This sequence belongs to the KdsB family.

It is found in the cytoplasm. The enzyme catalyses 3-deoxy-alpha-D-manno-oct-2-ulosonate + CTP = CMP-3-deoxy-beta-D-manno-octulosonate + diphosphate. Its pathway is nucleotide-sugar biosynthesis; CMP-3-deoxy-D-manno-octulosonate biosynthesis; CMP-3-deoxy-D-manno-octulosonate from 3-deoxy-D-manno-octulosonate and CTP: step 1/1. It functions in the pathway bacterial outer membrane biogenesis; lipopolysaccharide biosynthesis. In terms of biological role, activates KDO (a required 8-carbon sugar) for incorporation into bacterial lipopolysaccharide in Gram-negative bacteria. This Alcanivorax borkumensis (strain ATCC 700651 / DSM 11573 / NCIMB 13689 / SK2) protein is 3-deoxy-manno-octulosonate cytidylyltransferase.